A 485-amino-acid chain; its full sequence is Zinc finger protein 639 (485 aa).

Residues 1–14 (MNEYPKKRKRKTLH) show a composition bias toward basic residues. The tract at residues 1–20 (MNEYPKKRKRKTLHPSRYSD) is disordered. Position 60 is a phosphoserine (Ser60). Lys76 is covalently cross-linked (Glycyl lysine isopeptide (Lys-Gly) (interchain with G-Cter in SUMO2)). A Phosphoserine modification is found at Ser88. Residues Lys177, Lys181, and Lys226 each participate in a glycyl lysine isopeptide (Lys-Gly) (interchain with G-Cter in SUMO2) cross-link. C2H2-type zinc fingers lie at residues 204–227 (YKCE…ILKH), 233–255 (NVCR…AKLH), 260–283 (YICK…ADTH), 289–311 (YWCE…FQEH), 374–397 (FVCQ…AIEH), 403–425 (HVCD…LNSH), 431–454 (YLCQ…DFKH), and 460–482 (HKCS…LPVH). The tract at residues 371-455 (KNFFVCQVCG…LKIHLDFKHS (85 aa)) is interaction with CTNNA2.

It belongs to the krueppel C2H2-type zinc-finger protein family. Interacts with CTNNA2.

Its subcellular location is the nucleus. Binds DNA and may function as a transcriptional repressor. This Homo sapiens (Human) protein is Zinc finger protein 639 (ZNF639).